The primary structure comprises 724 residues: Phenylalanine ammonia-lyase (724 aa).

The active-site Proton donor/acceptor is the Tyr99. Residues Ala204–Gly206 constitute a cross-link (5-imidazolinone (Ala-Gly)). Residue Ser205 is modified to 2,3-didehydroalanine (Ser). Asn265, Gln355, Arg361, Asn391, Lys462, Glu490, and Asn493 together coordinate (E)-cinnamate.

This sequence belongs to the PAL/histidase family. In terms of assembly, homotetramer. Post-translationally, contains an active site 4-methylidene-imidazol-5-one (MIO), which is formed autocatalytically by cyclization and dehydration of residues Ala-Ser-Gly.

It localises to the cytoplasm. It carries out the reaction L-phenylalanine = (E)-cinnamate + NH4(+). Its pathway is phenylpropanoid metabolism; trans-cinnamate biosynthesis; trans-cinnamate from L-phenylalanine: step 1/1. Functionally, catalyzes the non-oxidative deamination of L-phenylalanine to form trans-cinnamic acid and a free ammonium ion. Facilitates the commitment step in phenylpropanoid pathways that produce secondary metabolites such as lignins, coumarins and flavonoids. The protein is Phenylalanine ammonia-lyase of Flammulina velutipes (Agaricus velutipes).